Here is a 270-residue protein sequence, read N- to C-terminus: Bis(5'-nucleosyl)-tetraphosphatase, symmetrical (270 aa).

This sequence belongs to the Ap4A hydrolase family.

The enzyme catalyses P(1),P(4)-bis(5'-adenosyl) tetraphosphate + H2O = 2 ADP + 2 H(+). Its function is as follows. Hydrolyzes diadenosine 5',5'''-P1,P4-tetraphosphate to yield ADP. The protein is Bis(5'-nucleosyl)-tetraphosphatase, symmetrical of Actinobacillus pleuropneumoniae serotype 5b (strain L20).